Consider the following 372-residue polypeptide: Putative glutamate--cysteine ligase 2 (372 aa).

This sequence belongs to the glutamate--cysteine ligase type 2 family. YbdK subfamily.

It carries out the reaction L-cysteine + L-glutamate + ATP = gamma-L-glutamyl-L-cysteine + ADP + phosphate + H(+). ATP-dependent carboxylate-amine ligase which exhibits weak glutamate--cysteine ligase activity. The polypeptide is Putative glutamate--cysteine ligase 2 (Gloeobacter violaceus (strain ATCC 29082 / PCC 7421)).